The primary structure comprises 166 residues: Urocortin-3 (166 aa).

The signal sequence occupies residues 1 to 23 (MLVPAPFLLVLLLLLGAPQVGLS). The propeptide occupies 24-123 (QRSPKAGSSP…QDKAKSDRRT (100 aa)). The span at 41–51 (REAEKSQRKDT) shows a compositional bias: basic and acidic residues. Residues 41–123 (REAEKSQRKD…QDKAKSDRRT (83 aa)) are disordered. Positions 68-77 (EDQEGQEEED) are enriched in acidic residues. Residues 86 to 96 (SVGGGGGGGAG) show a composition bias toward gly residues. The segment covering 113 to 123 (SQDKAKSDRRT) has biased composition (basic and acidic residues). Ile-162 carries the post-translational modification Isoleucine amide.

It belongs to the sauvagine/corticotropin-releasing factor/urotensin I family. As to quaternary structure, binds with high affinity to CRF receptors 2-alpha and 2-beta.

Its subcellular location is the secreted. Its function is as follows. Suppresses food intake, delays gastric emptying and decreases heat-induced edema. Might represent an endogenous ligand for maintaining homeostasis after stress. This is Urocortin-3 (UCN3) from Bos taurus (Bovine).